Consider the following 485-residue polypeptide: Cysteine--tRNA ligase (485 aa).

C28 contacts Zn(2+). The 'HIGH' region motif lies at 30–40 (MTVYDYCHLGH). Residues C212, H237, and E241 each coordinate Zn(2+). A 'KMSKS' region motif is present at residues 269-273 (KMSKS). An ATP-binding site is contributed by K272.

Belongs to the class-I aminoacyl-tRNA synthetase family. As to quaternary structure, monomer. Zn(2+) is required as a cofactor.

It is found in the cytoplasm. It carries out the reaction tRNA(Cys) + L-cysteine + ATP = L-cysteinyl-tRNA(Cys) + AMP + diphosphate. The polypeptide is Cysteine--tRNA ligase (Bordetella bronchiseptica (strain ATCC BAA-588 / NCTC 13252 / RB50) (Alcaligenes bronchisepticus)).